The following is a 589-amino-acid chain: Parathyroid hormone/parathyroid hormone-related peptide receptor (589 aa).

A signal peptide spans 1 to 28; sequence MGAARIAPGLALLLCCPVLSSAYALVDA. Over 29 to 188 the chain is Extracellular; it reads DDVMTKEEQI…REREVFDRLG (160 aa). 3 disulfide bridges follow: Cys-48/Cys-117, Cys-108/Cys-148, and Cys-131/Cys-170. Residues 64–105 are disordered; sequence ESDKGWASASTSGKPKKEKPSGKLHPESEEDKEVPTGSRPRG. A compositionally biased stretch (basic and acidic residues) spans 81–90; sequence EKPSGKLHPE. 4 N-linked (GlcNAc...) asparagine glycosylation sites follow: Asn-151, Asn-161, Asn-166, and Asn-176. The helical transmembrane segment at 189–209 threads the bilayer; the sequence is MIYTVGYSVSLASLTVAVLIL. At 210–223 the chain is on the cytoplasmic side; the sequence is AYFRRLHCTRNYIH. A helical transmembrane segment spans residues 224–244; the sequence is MHLFLSFMLRAVSIFVKDAVL. Residues 245–294 are Extracellular-facing; the sequence is YSGTALDEAERLTEEELRAIAQAPPPPAAAAGYVGCRVAVTFFLYFLATN. The helical transmembrane segment at 295 to 315 threads the bilayer; it reads YYWILVEGLYLHSLIFMAFFS. Topologically, residues 316–318 are cytoplasmic; that stretch reads EKK. The helical transmembrane segment at 319–339 threads the bilayer; the sequence is YLWGFTVFGWGLPAIFVAVWV. Residues 340 to 360 are Extracellular-facing; sequence SVRATLANTGCWDLSSGNKKW. A helical transmembrane segment spans residues 361–381; the sequence is IIQVPILASIVLNFILFINIV. Residues 382-404 are Cytoplasmic-facing; that stretch reads RVLATKLRETNAGRCDTRQQYRK. A helical membrane pass occupies residues 405–425; the sequence is LLKSTLVLMPLFGVHYIVFMA. Residues 426–439 are Extracellular-facing; it reads TPYTEVSGTLWQVQ. The chain crosses the membrane as a helical span at residues 440 to 460; it reads MHYEMLFNSFQGFFVAIIYCF. Residues 461 to 589 lie on the Cytoplasmic side of the membrane; that stretch reads CNGEVQAEIK…LLQEEWETVM (129 aa). The Important for interaction with G proteins motif lies at 473 to 476; the sequence is WSRW. A disordered region spans residues 524 to 549; it reads AATTNGHPPLPGHTKSGSPALQATPP. Thr-547 carries the post-translational modification Phosphothreonine.

The protein belongs to the G-protein coupled receptor 2 family. Homodimer in the absence of bound ligand. Peptide hormone binding leads to dissociation of the homodimer. Post-translationally, N-glycosylated.

It is found in the cell membrane. Functionally, G-protein-coupled receptor for parathyroid hormone (PTH) and for parathyroid hormone-related peptide (PTHLH). Ligand binding causes a conformation change that triggers signaling via guanine nucleotide-binding proteins (G proteins) and modulates the activity of downstream effectors, such as adenylate cyclase (cAMP). PTH1R is coupled to G(s) G alpha proteins and mediates activation of adenylate cyclase activity. PTHLH dissociates from PTH1R more rapidly than PTH; as consequence, the cAMP response induced by PTHLH decays faster than the response induced by PTH. The sequence is that of Parathyroid hormone/parathyroid hormone-related peptide receptor (PTH1R) from Bos taurus (Bovine).